The primary structure comprises 273 residues: WIMGHMVNAIAQIDEFVNLGANSIETDVSFDSSDNPEYTYHGIPCDCGRTCTKWEHFNEFLKGLRKATTPGDSKYHEKLVLVVFDLKTGSLYDNQASDAGKKLAKSLLQNYWNNGNNGGRAYIVLSIPNLAHYKLITGFKEALTSEGHPELMDKVGYDFSGNDDIGDVANAYKKAGVTGHVWQSDGITNCLLRGLDRVRKAVANRDSSNGYINKVYYWTVDKRQSTRDALDAGVDGIMTNYPDVIADVLNESAYKAKFRIASYDDNPWETFKN.

His5 is an active-site residue. 2 residues coordinate Mg(2+): Glu25 and Asp27. His41 (nucleophile) is an active-site residue. 2 disulfide bridges follow: Cys45–Cys51 and Cys47–Cys190. A Mg(2+)-binding site is contributed by Asp85. N-linked (GlcNAc...) asparagine glycosylation is present at Asn250.

The protein belongs to the arthropod phospholipase D family. Class II subfamily. The cofactor is Mg(2+). Expressed by the venom gland.

It localises to the secreted. It carries out the reaction an N-(acyl)-sphingosylphosphocholine = an N-(acyl)-sphingosyl-1,3-cyclic phosphate + choline. The enzyme catalyses an N-(acyl)-sphingosylphosphoethanolamine = an N-(acyl)-sphingosyl-1,3-cyclic phosphate + ethanolamine. The catalysed reaction is a 1-acyl-sn-glycero-3-phosphocholine = a 1-acyl-sn-glycero-2,3-cyclic phosphate + choline. It catalyses the reaction a 1-acyl-sn-glycero-3-phosphoethanolamine = a 1-acyl-sn-glycero-2,3-cyclic phosphate + ethanolamine. Functionally, dermonecrotic toxins cleave the phosphodiester linkage between the phosphate and headgroup of certain phospholipids (sphingolipid and lysolipid substrates), forming an alcohol (often choline) and a cyclic phosphate. This toxin acts on sphingomyelin (SM). It may also act on ceramide phosphoethanolamine (CPE), lysophosphatidylcholine (LPC) and lysophosphatidylethanolamine (LPE), but not on lysophosphatidylserine (LPS), and lysophosphatidylglycerol (LPG). It acts by transphosphatidylation, releasing exclusively cyclic phosphate products as second products. Induces dermonecrosis, hemolysis, increased vascular permeability, edema, inflammatory response, and platelet aggregation. In Loxosceles arizonica (Arizona brown spider), this protein is Dermonecrotic toxin LarSicTox-alphaIB1b.